Here is an 858-residue protein sequence, read N- to C-terminus: Large structural phosphoprotein (858 aa).

Residues 603–629 (DVSRGGKGNSRDLYSGGNAEKKETSGK) form a disordered region.

The protein belongs to the herpesviridae large structural phosphoprotein family. As to quaternary structure, homotetramer. Interacts with the major capsid protein. 180 tegument protein pU11 tetramers bind to the virion capsid. Phosphorylated at multiple sites.

The protein resides in the virion tegument. The sequence is that of Large structural phosphoprotein (U11) from Homo sapiens (Human).